A 122-amino-acid polypeptide reads, in one-letter code: Small ribosomal subunit protein uS13 (122 aa).

The interval 94–122 (GLPVRGQVTQKNARTRKGPRKTVAGKKGK) is disordered. Basic residues predominate over residues 106 to 122 (ARTRKGPRKTVAGKKGK).

The protein belongs to the universal ribosomal protein uS13 family. As to quaternary structure, part of the 30S ribosomal subunit. Forms a loose heterodimer with protein S19. Forms two bridges to the 50S subunit in the 70S ribosome.

In terms of biological role, located at the top of the head of the 30S subunit, it contacts several helices of the 16S rRNA. In the 70S ribosome it contacts the 23S rRNA (bridge B1a) and protein L5 of the 50S subunit (bridge B1b), connecting the 2 subunits; these bridges are implicated in subunit movement. Contacts the tRNAs in the A and P-sites. This chain is Small ribosomal subunit protein uS13, found in Mycoplasma mobile (strain ATCC 43663 / 163K / NCTC 11711) (Mesomycoplasma mobile).